We begin with the raw amino-acid sequence, 130 residues long: Small ribosomal subunit protein uS9 (130 aa).

This sequence belongs to the universal ribosomal protein uS9 family.

The chain is Small ribosomal subunit protein uS9 from Methylococcus capsulatus (strain ATCC 33009 / NCIMB 11132 / Bath).